Here is an 819-residue protein sequence, read N- to C-terminus: DNA topoisomerase 4 subunit A (819 aa).

Positions 30–496 constitute a Topo IIA-type catalytic domain; the sequence is LPDIRDGLKP…QIIEIDTASL (467 aa). Y118 (O-(5'-phospho-DNA)-tyrosine intermediate) is an active-site residue.

This sequence belongs to the type II topoisomerase GyrA/ParC subunit family. ParC type 2 subfamily. As to quaternary structure, heterotetramer composed of ParC and ParE.

Its subcellular location is the cell membrane. It carries out the reaction ATP-dependent breakage, passage and rejoining of double-stranded DNA.. Its function is as follows. Topoisomerase IV is essential for chromosome segregation. It relaxes supercoiled DNA. Performs the decatenation events required during the replication of a circular DNA molecule. The protein is DNA topoisomerase 4 subunit A of Streptococcus pyogenes serotype M6 (strain ATCC BAA-946 / MGAS10394).